We begin with the raw amino-acid sequence, 375 residues long: Probable disease resistance protein At1g52660 (375 aa).

An NB-ARC domain is found at 158-372; it reads ENTGIIGLYG…LSNSPPNFSG (215 aa). Residue 167–174 coordinates ATP; that stretch reads GVEGVGKT.

In terms of biological role, possible disease resistance protein. This is Probable disease resistance protein At1g52660 from Arabidopsis thaliana (Mouse-ear cress).